Consider the following 465-residue polypeptide: UDP-N-acetylmuramoylalanine--D-glutamate ligase (465 aa).

127 to 133 is a binding site for ATP; sequence GSNGKST.

This sequence belongs to the MurCDEF family.

The protein localises to the cytoplasm. It carries out the reaction UDP-N-acetyl-alpha-D-muramoyl-L-alanine + D-glutamate + ATP = UDP-N-acetyl-alpha-D-muramoyl-L-alanyl-D-glutamate + ADP + phosphate + H(+). The protein operates within cell wall biogenesis; peptidoglycan biosynthesis. Functionally, cell wall formation. Catalyzes the addition of glutamate to the nucleotide precursor UDP-N-acetylmuramoyl-L-alanine (UMA). The protein is UDP-N-acetylmuramoylalanine--D-glutamate ligase of Cereibacter sphaeroides (strain ATCC 17029 / ATH 2.4.9) (Rhodobacter sphaeroides).